The following is a 216-amino-acid chain: MSLPMLQVALDNQTMDSAYETTRQIAEEVDIIEVGTILCVGEGVRAVRDLKALYPHKIVLADAKIADAGKILSRMCFEANADWVTVICCADINTAKGALDVAKEFNGDVQIELTGYWTWEQAQQWRDAGIQQVVYHRSRDAQAAGVAWGEADITAIKRLSDMGFKVTVTGGLALEDLPLFKGIPIHVFIAGRSIRDAASPVEAARQFKRSIAELWG.

Asp-11 lines the substrate pocket. Glu-33 and Asp-62 together coordinate Mg(2+). Arg-192 serves as a coordination point for substrate.

This sequence belongs to the HPS/KGPDC family. KGPDC subfamily. Homodimer. Mg(2+) serves as cofactor.

The catalysed reaction is 3-dehydro-L-gulonate 6-phosphate + H(+) = L-xylulose 5-phosphate + CO2. Its pathway is cofactor degradation; L-ascorbate degradation; D-xylulose 5-phosphate from L-ascorbate: step 2/4. In terms of biological role, catalyzes the decarboxylation of 3-keto-L-gulonate-6-P into L-xylulose-5-P. Is involved in the anaerobic L-ascorbate utilization. In Escherichia coli O17:K52:H18 (strain UMN026 / ExPEC), this protein is 3-keto-L-gulonate-6-phosphate decarboxylase UlaD.